The sequence spans 626 residues: Serine/threonine-protein kinase PknB (626 aa).

The Cytoplasmic portion of the chain corresponds to Met-1–Trp-332. Residues Tyr-11–Val-274 enclose the Protein kinase domain. Residues Leu-17 to Val-25, Lys-40, and Glu-93 to Val-95 contribute to the ATP site. Asp-138 functions as the Proton acceptor in the catalytic mechanism. ATP contacts are provided by residues Lys-140–Asn-143 and Asp-156. 2 residues coordinate Mg(2+): Asn-143 and Asp-156. Residues Ser-166 and Ser-169 each carry the phosphoserine; by autocatalysis modification. Phosphothreonine; by autocatalysis occurs at positions 171, 173, and 294. Ser-295 bears the Phosphoserine; by autocatalysis mark. The segment at Ser-299–Asp-323 is disordered. Thr-309 carries the post-translational modification Phosphothreonine; by autocatalysis. Over residues Pro-311–Asp-323 the composition is skewed to basic and acidic residues. The helical transmembrane segment at Val-333–Phe-353 threads the bilayer. At Gly-354–Gln-626 the chain is on the extracellular side. PASTA domains are found at residues Ile-356–Thr-422, Gly-423–Ser-490, Gly-491–Lys-557, and Gly-558–Gln-626.

The protein belongs to the protein kinase superfamily. Ser/Thr protein kinase family. In terms of assembly, homodimer. In terms of processing, autophosphorylated. Dephosphorylated by PstP.

It is found in the cell membrane. The catalysed reaction is L-seryl-[protein] + ATP = O-phospho-L-seryl-[protein] + ADP + H(+). It catalyses the reaction L-threonyl-[protein] + ATP = O-phospho-L-threonyl-[protein] + ADP + H(+). Functionally, protein kinase that regulates many aspects of mycobacterial physiology. Is a key component of a signal transduction pathway that regulates cell growth, cell shape and cell division via phosphorylation of target proteins. This Mycobacterium bovis (strain ATCC BAA-935 / AF2122/97) protein is Serine/threonine-protein kinase PknB (pknB).